A 159-amino-acid chain; its full sequence is Regulatory protein RecX (159 aa).

It belongs to the RecX family.

It is found in the cytoplasm. Modulates RecA activity. The polypeptide is Regulatory protein RecX (Ralstonia pickettii (strain 12J)).